Here is a 329-residue protein sequence, read N- to C-terminus: MSSFDTIAVLGGGAWGTALALTAARAGRSVTLWEHDAGNAQHLIEARESRFLPGVRLDDSIKVTQDLAEAARAQALLLVVPAQVLRSVATSLQPLIAARTPLIACAKGIEHGTHRFMTEIIAECAPNAVPAILSGPSFAADVARGLPTAVTIAATDADVAQALAQAMNSGSFRPYHSTDVRGVELGGATKNVMAIAAGIVAGRQLGASALAAMTTRGFVELVRFGKAYGARIETMHGLSGLGDLTMCCSTPQSRNFSFGMALGRGESIDTAAHGKLAEGYYTAPVLLEMAQAKGVEMPISTAVAAILDGRLGVDAAIEGLLTRPLKAEE.

Residues Trp-15, His-35, and Lys-107 each contribute to the NADPH site. Residues Lys-107, Gly-135, and Ser-137 each coordinate sn-glycerol 3-phosphate. Ala-139 contacts NADPH. Positions 190, 243, 253, 254, and 255 each coordinate sn-glycerol 3-phosphate. The active-site Proton acceptor is Lys-190. Arg-254 is a binding site for NADPH. 2 residues coordinate NADPH: Leu-276 and Glu-278.

It belongs to the NAD-dependent glycerol-3-phosphate dehydrogenase family.

It localises to the cytoplasm. It carries out the reaction sn-glycerol 3-phosphate + NAD(+) = dihydroxyacetone phosphate + NADH + H(+). The enzyme catalyses sn-glycerol 3-phosphate + NADP(+) = dihydroxyacetone phosphate + NADPH + H(+). It functions in the pathway membrane lipid metabolism; glycerophospholipid metabolism. Functionally, catalyzes the reduction of the glycolytic intermediate dihydroxyacetone phosphate (DHAP) to sn-glycerol 3-phosphate (G3P), the key precursor for phospholipid synthesis. This chain is Glycerol-3-phosphate dehydrogenase [NAD(P)+], found in Rhodopseudomonas palustris (strain HaA2).